Consider the following 316-residue polypeptide: Transaldolase (316 aa).

The Schiff-base intermediate with substrate role is filled by Lys132.

This sequence belongs to the transaldolase family. Type 1 subfamily. In terms of assembly, homodimer.

It is found in the cytoplasm. The catalysed reaction is D-sedoheptulose 7-phosphate + D-glyceraldehyde 3-phosphate = D-erythrose 4-phosphate + beta-D-fructose 6-phosphate. It participates in carbohydrate degradation; pentose phosphate pathway; D-glyceraldehyde 3-phosphate and beta-D-fructose 6-phosphate from D-ribose 5-phosphate and D-xylulose 5-phosphate (non-oxidative stage): step 2/3. In terms of biological role, transaldolase is important for the balance of metabolites in the pentose-phosphate pathway. The polypeptide is Transaldolase (Vibrio vulnificus (strain YJ016)).